A 270-amino-acid chain; its full sequence is Putative hydro-lyase ACIAD2519 (270 aa).

This sequence belongs to the D-glutamate cyclase family.

In Acinetobacter baylyi (strain ATCC 33305 / BD413 / ADP1), this protein is Putative hydro-lyase ACIAD2519.